Here is a 199-residue protein sequence, read N- to C-terminus: Imidazole glycerol phosphate synthase subunit HisH (199 aa).

A Glutamine amidotransferase type-1 domain is found at Met-1–Leu-199. The active-site Nucleophile is the Cys-79. Catalysis depends on residues His-180 and Glu-182.

In terms of assembly, heterodimer of HisH and HisF.

The protein localises to the cytoplasm. The enzyme catalyses 5-[(5-phospho-1-deoxy-D-ribulos-1-ylimino)methylamino]-1-(5-phospho-beta-D-ribosyl)imidazole-4-carboxamide + L-glutamine = D-erythro-1-(imidazol-4-yl)glycerol 3-phosphate + 5-amino-1-(5-phospho-beta-D-ribosyl)imidazole-4-carboxamide + L-glutamate + H(+). The catalysed reaction is L-glutamine + H2O = L-glutamate + NH4(+). Its pathway is amino-acid biosynthesis; L-histidine biosynthesis; L-histidine from 5-phospho-alpha-D-ribose 1-diphosphate: step 5/9. Its function is as follows. IGPS catalyzes the conversion of PRFAR and glutamine to IGP, AICAR and glutamate. The HisH subunit catalyzes the hydrolysis of glutamine to glutamate and ammonia as part of the synthesis of IGP and AICAR. The resulting ammonia molecule is channeled to the active site of HisF. This chain is Imidazole glycerol phosphate synthase subunit HisH, found in Carboxydothermus hydrogenoformans (strain ATCC BAA-161 / DSM 6008 / Z-2901).